A 408-amino-acid polypeptide reads, in one-letter code: UPF0761 membrane protein azo3165 (408 aa).

The next 7 membrane-spanning stretches (helical) occupy residues 29-49, 92-112, 131-151, 172-192, 197-217, 220-240, and 241-261; these read LAFT…GVFG, LTLI…ATIE, ITVS…SVVA, IAAA…LYYA, PVRL…FLLM, GLGL…TFAA, and LPIF…GALI.

It belongs to the UPF0761 family.

The protein resides in the cell inner membrane. In Azoarcus sp. (strain BH72), this protein is UPF0761 membrane protein azo3165.